We begin with the raw amino-acid sequence, 436 residues long: 3-ketoacyl-CoA thiolase (436 aa).

Cys99 serves as the catalytic Acyl-thioester intermediate. Catalysis depends on proton acceptor residues His392 and Cys422.

The protein belongs to the thiolase-like superfamily. Thiolase family. As to quaternary structure, heterotetramer of two alpha chains (FadJ) and two beta chains (FadI).

It localises to the cytoplasm. It catalyses the reaction an acyl-CoA + acetyl-CoA = a 3-oxoacyl-CoA + CoA. It participates in lipid metabolism; fatty acid beta-oxidation. Functionally, catalyzes the final step of fatty acid oxidation in which acetyl-CoA is released and the CoA ester of a fatty acid two carbons shorter is formed. This is 3-ketoacyl-CoA thiolase from Aeromonas salmonicida (strain A449).